The chain runs to 1097 residues: MSSSAIQVAKTATYLPDLVEVQRASFKWFLEKGLIEELESFSPITDYTGKLELHFVGSEYRLKRPRHDVEEAKRRDATFASQMYVTCRLVNKETGEIKEQEVFIGELPLMTERGTFIINGAERVIVNQIVRSPGVYFKDEQDKNGRRTYNASVIPNRGAWLKFETDKNDLLHVRVDKTRKINAHVLMRAMGLSDNDVIDKLRHPEYYKKSIEAANDEGISSEDQALLELYKKLRPGEPPSVSGGQQLLQTRFFDPKRYDLGRVGRYKINKKLRLTIPDSVRTLTHEDVLSTLDYLINLELDVGGASLDDIDHLGNRRVRSVGELLQNQVRVGLNRLERIIKERMTVGETDSLTPAQLVNPKPLVAAIKEFFGSSQLSQFMDQTNPLAELTHKRRISALGPGGLTRERAGFAVRDIHPSHYGRLCPIETPEGPNAGLINSLATHARVNEYGFIETPFWKVENGRVLKQGDPIYLSADLEDECRVAPGDVATDSDGAILADLIPVRYRQDFEKVPPEQVDYVQLSPVQVISVATSLIPFLEHDDANRALMGSNMQRQAVPLLRPERPLVGTGLETQVARDSGMVPISRVNGTVTFVDATAIVVRDEEGVDHSHYLQKYQRSNQDTCLNQRPIVRQGDPVIVGQVLADGSACEGGEIALGQNVLIAYMPWEGYNYEDAILVSERLVNDDLYTSVHIEKYEIEARQTKLGPEEITREIPNVAEESLGNLDEMGIIRIGAFVESGDILVGKVTPKGESDQPPEEKLLRAIFGEKARDVRDNSLRVPSTERGRVVDVRIYTREQGDELPPGANMVVRVYVAQRRKIQVGDKMAGRHGNKGIISRILPREDMPYLPDGTPVDIVLNPLGVPSRMNVGQVFELLMGWAAANLDCRVKVVPFDEMYGAEKSQQTVETFLKEAAKQPGKEWIYNPDDPGKLQLIDGRSGEPFDQPVAVGYSHFLKLVHLVDDKIHARSTGPYSLVTQQPLGGKAQQGGQRLGEMEVWALEAYGAAYTLQELLTVKSDDMQGRNEALNAIVKGKPIPRPGTPESFKVLMRELQSLGLDIAVFTDEGKEVDLMQDVNPRRSTPSRPTYESLGVADYDED.

The disordered stretch occupies residues 1072–1097; the sequence is QDVNPRRSTPSRPTYESLGVADYDED.

The protein belongs to the RNA polymerase beta chain family. In terms of assembly, in cyanobacteria the RNAP catalytic core is composed of 2 alpha, 1 beta, 1 beta', 1 gamma and 1 omega subunit. When a sigma factor is associated with the core the holoenzyme is formed, which can initiate transcription.

The enzyme catalyses RNA(n) + a ribonucleoside 5'-triphosphate = RNA(n+1) + diphosphate. In terms of biological role, DNA-dependent RNA polymerase catalyzes the transcription of DNA into RNA using the four ribonucleoside triphosphates as substrates. This chain is DNA-directed RNA polymerase subunit beta, found in Synechococcus sp. (strain WH7803).